We begin with the raw amino-acid sequence, 525 residues long: GMP synthase [glutamine-hydrolyzing] (525 aa).

Residues 9–207 (RILILDFGSQ…ILDICGCEAL (199 aa)) form the Glutamine amidotransferase type-1 domain. Cysteine 86 acts as the Nucleophile in catalysis. Active-site residues include histidine 181 and glutamate 183. Positions 208–400 (WTPSKIAEDA…LGLPYDMVYR (193 aa)) constitute a GMPS ATP-PPase domain. 235–241 (SGGVDSS) contributes to the ATP binding site.

Homodimer.

It carries out the reaction XMP + L-glutamine + ATP + H2O = GMP + L-glutamate + AMP + diphosphate + 2 H(+). It functions in the pathway purine metabolism; GMP biosynthesis; GMP from XMP (L-Gln route): step 1/1. In terms of biological role, catalyzes the synthesis of GMP from XMP. This is GMP synthase [glutamine-hydrolyzing] from Pseudomonas syringae pv. syringae (strain B728a).